A 742-amino-acid polypeptide reads, in one-letter code: Zinc transporter ZIP6 (742 aa).

The Extracellular segment spans residues 1 to 353 (MMTFLCTRSG…QRNTPVYIAW (353 aa)). N-linked (GlcNAc...) asparagine glycosylation is found at Asn94 and Asn127. 2 disordered regions span residues 148–182 (PVTT…SQSD) and 191–210 (MNQE…RSRR). Over residues 152 to 165 (KKGDMDHSVEKSDP) the composition is skewed to basic and acidic residues. Residues 192-206 (NQESTTALTTPSYVT) show a composition bias toward polar residues. N-linked (GlcNAc...) asparagine glycosylation is found at Asn212, Asn232, and Asn237. Positions 220–260 (TQDHASFSPSQPNVTHSNHTHHDEDTPTHQHDDHDEHEHAR) are disordered. Residues 222 to 236 (DHASFSPSQPNVTHS) are compositionally biased toward polar residues. A compositionally biased stretch (basic and acidic residues) spans 239-260 (THHDEDTPTHQHDDHDEHEHAR). 2 N-linked (GlcNAc...) asparagine glycosylation sites follow: Asn267 and Asn337. A disordered region spans residues 310–342 (EDEHSDHSHHHKHHHHHHDHQHLQHPHNHTNGR). Positions 316 to 339 (HSHHHKHHHHHHDHQHLQHPHNHT) are enriched in basic residues. Residues 354–374 (LGGFLSITLISLLALVGVVLI) traverse the membrane as a helical segment. Over 375-385 (PLMNRVCFNFL) the chain is Cytoplasmic. Residues 386 to 406 (LSFLVALAVGTLSGDALLHLI) traverse the membrane as a helical segment. At 407–430 (PHSQGHHHHGHSEEHAEEEDSLRP) the chain is on the extracellular side. A helical membrane pass occupies residues 431–451 (VWTGLTALSGVYIMFLIEHFL). Residues 452–644 (TLGKMYKDKN…LKAGMSVRQA (193 aa)) lie on the Cytoplasmic side of the membrane. A helical membrane pass occupies residues 645–665 (MLYNLLSALMGYLGMIIGILI). At 666-671 (GHYAEN) the chain is on the extracellular side. A helical membrane pass occupies residues 672 to 692 (VATWIFALTAGLFMYVALVDM). Residues 693–710 (VPEMLHNDASEAGFSHYG) are Cytoplasmic-facing. A helical membrane pass occupies residues 711-731 (FFLLQNAGILLGFGIMLIIAV). The Extracellular segment spans residues 732–742 (FEDRIQLDLGY).

It belongs to the ZIP transporter (TC 2.A.5) family. Cleaved on the N-terminus before locating to the plasma membrane. In terms of processing, N-glycosylated.

The protein localises to the cell membrane. It carries out the reaction Zn(2+)(in) = Zn(2+)(out). In terms of biological role, acts as a zinc-influx transporter which plays a role in zinc homeostasis and in the induction of epithelial-to-mesenchymal transition (EMT). The sequence is that of Zinc transporter ZIP6 from Danio rerio (Zebrafish).